A 103-amino-acid chain; its full sequence is Small ribosomal subunit protein uS10 (103 aa).

Belongs to the universal ribosomal protein uS10 family. As to quaternary structure, part of the 30S ribosomal subunit.

Functionally, involved in the binding of tRNA to the ribosomes. The polypeptide is Small ribosomal subunit protein uS10 (Hahella chejuensis (strain KCTC 2396)).